Consider the following 329-residue polypeptide: UPF0158 protein CT_429 (329 aa).

The tract at residues 292–329 (GYDSDGETGDFFDEEYDDEEEEIKPKKTTKRGRKKSRS) is disordered. Positions 295-313 (SDGETGDFFDEEYDDEEEE) are enriched in acidic residues. Residues 317–329 (KKTTKRGRKKSRS) show a composition bias toward basic residues.

This sequence belongs to the UPF0158 family.

The sequence is that of UPF0158 protein CT_429 from Chlamydia trachomatis serovar D (strain ATCC VR-885 / DSM 19411 / UW-3/Cx).